Here is a 491-residue protein sequence, read N- to C-terminus: Serralysin (491 aa).

Residues Met1–Ser16 constitute a propeptide that is removed on maturation. His186 provides a ligand contact to Zn(2+). The active site involves Glu187. The Zn(2+) site is built by His190, His196, and Tyr226. Arg263, Gly265, Asp295, Gly297, Gly298, Asp300, Thr337, Glu339, Gly344, Gly346, Asp348, Asn353, Ala355, Asn357, Gly361, Gly362, Gly364, Asp366, Gly370, Gly373, Asp384, Gly388, Gly389, Gly391, Asp402, Asp409, and Asp419 together coordinate Ca(2+). Hemolysin-type calcium-binding repeat units lie at residues Ile342–Leu359, Ile360–Ile377, and Tyr378–Phe395.

This sequence belongs to the peptidase M10B family. Requires Ca(2+) as cofactor. Zn(2+) is required as a cofactor.

The protein localises to the secreted. The enzyme catalyses Preferential cleavage of bonds with hydrophobic residues in P1'.. Ca(2+) increases protease activity. Its function is as follows. One of the virulence factors produced during swarmer cell differentiation of the bacteria, which seems to be associated with pathogenesis. The protease activity is limited to IgA1, IgA2, as well as IgG degradation. The protein is Serralysin (zapA) of Proteus mirabilis.